A 750-amino-acid polypeptide reads, in one-letter code: Photosystem I P700 chlorophyll a apoprotein A1 (750 aa).

8 helical membrane-spanning segments follow: residues 70–93, 156–179, 195–219, 291–309, 346–369, 385–411, 433–455, and 531–549; these read VFSAHFGQLSIIFLWLSGMYFHGA, LYCTAIGALVFAALMLFAGWFHYH, LNHHLAGLLGLGSLSWAGHQVHVSL, IAHHHLAIAILFLVAGHMY, WHAQLSLNLAMLGSSTIVVAHHMY, LSLFTHHMWIGGFLIVGAAAHAAIFMV, AIISHLNWACIFLGFHSFGLYIH, and FLVHHIHAFTIHVTVLILL. [4Fe-4S] cluster is bound by residues Cys-573 and Cys-582. 2 helical membrane-spanning segments follow: residues 589-610 and 664-686; these read HVFLGLFWMYNAISVVIFHFSW and LSAYGLFFLGAHFVWAFSLMFLF. Residue His-675 participates in chlorophyll a' binding. Chlorophyll a contacts are provided by Met-683 and Tyr-691. Phylloquinone is bound at residue Trp-692. Residues 724 to 744 form a helical membrane-spanning segment; it reads AVGVTHYLLGGIATTWAFFLA.

Belongs to the PsaA/PsaB family. As to quaternary structure, the PsaA/B heterodimer binds the P700 chlorophyll special pair and subsequent electron acceptors. PSI consists of a core antenna complex that captures photons, and an electron transfer chain that converts photonic excitation into a charge separation. The eukaryotic PSI reaction center is composed of at least 11 subunits. P700 is a chlorophyll a/chlorophyll a' dimer, A0 is one or more chlorophyll a, A1 is one or both phylloquinones and FX is a shared 4Fe-4S iron-sulfur center. serves as cofactor.

The protein localises to the plastid. Its subcellular location is the chloroplast thylakoid membrane. It catalyses the reaction reduced [plastocyanin] + hnu + oxidized [2Fe-2S]-[ferredoxin] = oxidized [plastocyanin] + reduced [2Fe-2S]-[ferredoxin]. PsaA and PsaB bind P700, the primary electron donor of photosystem I (PSI), as well as the electron acceptors A0, A1 and FX. PSI is a plastocyanin-ferredoxin oxidoreductase, converting photonic excitation into a charge separation, which transfers an electron from the donor P700 chlorophyll pair to the spectroscopically characterized acceptors A0, A1, FX, FA and FB in turn. Oxidized P700 is reduced on the lumenal side of the thylakoid membrane by plastocyanin. In Calycanthus floridus var. glaucus (Eastern sweetshrub), this protein is Photosystem I P700 chlorophyll a apoprotein A1.